A 166-amino-acid polypeptide reads, in one-letter code: uncharacterized protein (166 aa).

Gly residues-rich tracts occupy residues 1–10 (MNYGNNGGGQ) and 76–86 (YRGGGGGGGGN). The interval 1-117 (MNYGNNGGGQ…GGGNKNFGPI (117 aa)) is disordered.

This is an uncharacterized protein from Caenorhabditis elegans.